Here is a 233-residue protein sequence, read N- to C-terminus: Probable fimbrial chaperone protein ElfD (233 aa).

The first 26 residues, 1 to 26 (MKTCITKGIVTVSLTAILLSCSSAWA), serve as a signal peptide directing secretion.

The protein belongs to the periplasmic pilus chaperone family.

It localises to the periplasm. Part of the elfADCG-ycbUVF fimbrial operon, which promotes adhesion of bacteria to different abiotic surfaces. Could be required for the biogenesis of the ElfA fimbriae. This Escherichia coli (strain K12) protein is Probable fimbrial chaperone protein ElfD (elfD).